Consider the following 361-residue polypeptide: uncharacterized protein (361 aa).

Residues 1–10 (MRRYLKKAKP) are compositionally biased toward basic residues. 2 disordered regions span residues 1 to 82 (MRRY…SSFH) and 94 to 147 (ALSH…VNTS). Basic and acidic residues-rich tracts occupy residues 44–57 (KEKN…KYEN) and 120–134 (FTKK…ESEL). A compositionally biased stretch (polar residues) spans 135–147 (QTRSSPPLPVNTS). The stretch at 295 to 349 (NILTMDEQIQRLKEAIASEKLQQEERSQIIKSLMEEELEINEQEEKIKHSFIDLD) forms a coiled coil.

It localises to the cytoplasm. The protein resides in the nucleus. This is an uncharacterized protein from Schizosaccharomyces pombe (strain 972 / ATCC 24843) (Fission yeast).